The primary structure comprises 93 residues: MVWMKFLGVLLMSMGCFVIFRMNKHLLCLFVGLEMMSLGLLFVTHVFLMNQFWLILLILCLAVCEASICLALLVMVMRLCGDDLMSSLLSDGS.

3 helical membrane passes run M1–R21, L29–M49, and L54–V74.

This sequence belongs to the complex I subunit 4L family.

The protein resides in the mitochondrion membrane. It carries out the reaction a ubiquinone + NADH + 5 H(+)(in) = a ubiquinol + NAD(+) + 4 H(+)(out). In terms of biological role, core subunit of the mitochondrial membrane respiratory chain NADH dehydrogenase (Complex I) that is believed to belong to the minimal assembly required for catalysis. Complex I functions in the transfer of electrons from NADH to the respiratory chain. The immediate electron acceptor for the enzyme is believed to be ubiquinone. The protein is NADH-ubiquinone oxidoreductase chain 4L (ND4L) of Mytilus edulis (Blue mussel).